Consider the following 207-residue polypeptide: Outer-membrane lipoprotein carrier protein (207 aa).

Positions 1–21 (MRLIRMLLATALTFSVIPAHA) are cleaved as a signal peptide.

Belongs to the LolA family. In terms of assembly, monomer.

It is found in the periplasm. In terms of biological role, participates in the translocation of lipoproteins from the inner membrane to the outer membrane. Only forms a complex with a lipoprotein if the residue after the N-terminal Cys is not an aspartate (The Asp acts as a targeting signal to indicate that the lipoprotein should stay in the inner membrane). This chain is Outer-membrane lipoprotein carrier protein, found in Pseudomonas syringae pv. tomato (strain ATCC BAA-871 / DC3000).